An 803-amino-acid polypeptide reads, in one-letter code: Urocanate reductase (803 aa).

The residue at position 258 (Ser-258) is an FMN phosphoryl serine. Residues Ala-311, Glu-330, Asn-338, Thr-339, Gly-343, Gly-344, and Asp-573 each coordinate FAD. Residue Arg-632 is the Proton donor of the active site. FAD-binding residues include His-739, Glu-768, Ala-783, and Leu-784.

Belongs to the FAD-dependent oxidoreductase 2 family. FRD/SDH subfamily. FAD serves as cofactor. Requires FMN as cofactor.

It carries out the reaction dihydrourocanate + A = urocanate + AH2. Its function is as follows. Catalyzes the two-electron reduction of urocanate to dihydrourocanate (also named imidazole propionate or deamino-histidine). Dihydrourocanate is present at higher concentrations in subjects with type 2 diabetes, and directly impairs glucose tolerance and insulin signaling at the level of insulin receptor substrate (IRS) through activation of p38 gamma (MAPK12)-p62-mTORC1. Therefore, the UrdA enzyme from the gut bacteria S.mutans strain UA159 may contribute to the pathogenesis of type 2 diabetes by producing the microbial metabolite dihydrourocanate. This chain is Urocanate reductase, found in Streptococcus mutans serotype c (strain ATCC 700610 / UA159).